A 65-amino-acid polypeptide reads, in one-letter code: MDMNRVKQIVSSPADIPVYYNGVSVWIDGYDEENQMATVHLRDGRLNERRDVPVAELEEKGEAAH.

The protein belongs to the SspH family.

The protein resides in the spore core. The polypeptide is Small, acid-soluble spore protein H 3 (Geobacillus thermodenitrificans (strain NG80-2)).